Here is a 57-residue protein sequence, read N- to C-terminus: DNA-directed RNA polymerase subunit Rpo6 (57 aa).

It belongs to the archaeal Rpo6/eukaryotic RPB6 RNA polymerase subunit family. As to quaternary structure, part of the RNA polymerase complex.

Its subcellular location is the cytoplasm. The enzyme catalyses RNA(n) + a ribonucleoside 5'-triphosphate = RNA(n+1) + diphosphate. Its function is as follows. DNA-dependent RNA polymerase (RNAP) catalyzes the transcription of DNA into RNA using the four ribonucleoside triphosphates as substrates. The protein is DNA-directed RNA polymerase subunit Rpo6 of Pyrococcus abyssi (strain GE5 / Orsay).